The following is a 603-amino-acid chain: Sabinene hydrate synthase, chloroplastic (603 aa).

The transit peptide at 1 to 47 (MSTISINHVGLLRNPLHGKSKRASINKSWSLCLPRSSSASRLVKPCR) directs the protein to the chloroplast. Mn(2+) is bound by residues D357 and D361. The DDXXD motif motif lies at 357–361 (DDVYD). Homodimerization regions lie at residues 363–369 (YGTLDEL) and 435–472 (EAEW…VSIP). Mn(2+)-binding residues include D501 and E509.

This sequence belongs to the terpene synthase family. Homodimer. Mn(2+) serves as cofactor. Requires Mg(2+) as cofactor.

The protein localises to the plastid. It localises to the chloroplast. It catalyses the reaction (2E)-geranyl diphosphate + H2O = sabinene hydrate + diphosphate. It participates in secondary metabolite biosynthesis; terpenoid biosynthesis. Involved in the biosynthesis of phenolic monoterpenes natural products. Monoterpene synthase which catalyzes the conversion of geranyl diphosphate (GPP) to sabinene hydrate, mainly (Z)-sabinene hydrate and to a lower extent (E)-sabinene hydrate, and the formation of minor amounts and traces of several other monoterpenes (e.g. mainly alpha-thujene, alpha-pinene and myrcene). In Thymus vulgaris (Thyme), this protein is Sabinene hydrate synthase, chloroplastic.